The chain runs to 225 residues: Proteasome activator 28 (225 aa).

This sequence belongs to the PA28 family. Homoheptamer. The homoheptamer associates with the 20S proteasome.

Its subcellular location is the nucleus. Functionally, subunit of the 11S REG (also called PA28) proteasome regulator, a doughnut-shaped homoheptamer which associates with the proteasome. 11S REG-gamma activates preferentially the trypsin-like catalytic subunit of the proteasome. May also be involved in cell cycle regulation. The protein is Proteasome activator 28 (psmE3) of Dictyostelium discoideum (Social amoeba).